The primary structure comprises 682 residues: Serine/threonine-protein kinase PLK2 (682 aa).

The disordered stretch occupies residues 25-67; the sequence is ACGGDSKKKRPQQPSEDGQSQAQVTPAAPHHHHHHSHSGPEIS. Residues 36 to 48 show a composition bias toward polar residues; the sequence is QQPSEDGQSQAQV. The 253-residue stretch at 79 to 331 folds into the Protein kinase domain; it reads YCRGKVLGKG…LDDIIRHDFF (253 aa). Residues 85–93 and Lys108 contribute to the ATP site; that span reads LGKGGFAKC. The Proton acceptor role is filled by Asp202. Thr236 carries the post-translational modification Phosphothreonine. The segment at 402-430 is disordered; that stretch reads TSITQQPSKHRTDEELQPPPTTFAKSGTS. POLO box domains follow at residues 500-578 and 598-682; these read WVTK…YMEE and YLLQ…QRCN.

It belongs to the protein kinase superfamily. Ser/Thr protein kinase family. CDC5/Polo subfamily. In terms of assembly, interacts with CIB1. Interacts with NSF; causing NSF dissociation from GRIA2. Post-translationally, catalytic activity is enhanced by phosphorylation of Thr-236.

The protein localises to the cytoplasm. It is found in the cytoskeleton. Its subcellular location is the microtubule organizing center. It localises to the centrosome. The protein resides in the centriole. The protein localises to the cell projection. It is found in the dendrite. It carries out the reaction L-seryl-[protein] + ATP = O-phospho-L-seryl-[protein] + ADP + H(+). The catalysed reaction is L-threonyl-[protein] + ATP = O-phospho-L-threonyl-[protein] + ADP + H(+). Activated by phosphorylation of Thr-236. Once activated, activity is stimulated by binding target proteins. In terms of biological role, tumor suppressor serine/threonine-protein kinase involved in synaptic plasticity, centriole duplication and G1/S phase transition. Polo-like kinases act by binding and phosphorylating proteins that are already phosphorylated on a specific motif recognized by the POLO box domains. Phosphorylates CPAP, NPM1, RAPGEF2, RASGRF1, SNCA, SIPA1L1 and SYNGAP1. Plays a key role in synaptic plasticity and memory by regulating the Ras and Rap protein signaling: required for overactivity-dependent spine remodeling by phosphorylating the Ras activator RASGRF1 and the Rap inhibitor SIPA1L1 leading to their degradation by the proteasome. Conversely, phosphorylates the Rap activator RAPGEF2 and the Ras inhibitor SYNGAP1, promoting their activity. Also regulates synaptic plasticity independently of kinase activity, via its interaction with NSF that disrupts the interaction between NSF and the GRIA2 subunit of AMPARs, leading to a rapid rundown of AMPAR-mediated current that occludes long term depression. Required for procentriole formation and centriole duplication by phosphorylating CPAP and NPM1, respectively. Its induction by p53/TP53 suggests that it may participate in the mitotic checkpoint following stress. The polypeptide is Serine/threonine-protein kinase PLK2 (Plk2) (Rattus norvegicus (Rat)).